A 210-amino-acid polypeptide reads, in one-letter code: Na(+)-translocating NADH-quinone reductase subunit D (210 aa).

6 helical membrane-spanning segments follow: residues Pro14–Val34, Leu42–Ile62, Ile72–Ala92, Val103–Met123, Phe131–Val151, and Asn178–Ile198.

It belongs to the NqrDE/RnfAE family. In terms of assembly, composed of six subunits; NqrA, NqrB, NqrC, NqrD, NqrE and NqrF.

Its subcellular location is the cell inner membrane. It catalyses the reaction a ubiquinone + n Na(+)(in) + NADH + H(+) = a ubiquinol + n Na(+)(out) + NAD(+). Functionally, NQR complex catalyzes the reduction of ubiquinone-1 to ubiquinol by two successive reactions, coupled with the transport of Na(+) ions from the cytoplasm to the periplasm. NqrA to NqrE are probably involved in the second step, the conversion of ubisemiquinone to ubiquinol. The chain is Na(+)-translocating NADH-quinone reductase subunit D from Shewanella putrefaciens (strain CN-32 / ATCC BAA-453).